Here is a 361-residue protein sequence, read N- to C-terminus: Probable dual-specificity RNA methyltransferase RlmN (361 aa).

Residue Glu-104 is the Proton acceptor of the active site. Residues 110–343 (HEYGNSVCVT…VTIRREQGHD (234 aa)) form the Radical SAM core domain. Cys-117 and Cys-348 form a disulfide bridge. Positions 124, 128, and 131 each coordinate [4Fe-4S] cluster. Residues 174-175 (GE), Ser-206, 229-231 (SLH), and Asn-305 contribute to the S-adenosyl-L-methionine site. The active-site S-methylcysteine intermediate is the Cys-348.

This sequence belongs to the radical SAM superfamily. RlmN family. The cofactor is [4Fe-4S] cluster.

The protein localises to the cytoplasm. The catalysed reaction is adenosine(2503) in 23S rRNA + 2 reduced [2Fe-2S]-[ferredoxin] + 2 S-adenosyl-L-methionine = 2-methyladenosine(2503) in 23S rRNA + 5'-deoxyadenosine + L-methionine + 2 oxidized [2Fe-2S]-[ferredoxin] + S-adenosyl-L-homocysteine. The enzyme catalyses adenosine(37) in tRNA + 2 reduced [2Fe-2S]-[ferredoxin] + 2 S-adenosyl-L-methionine = 2-methyladenosine(37) in tRNA + 5'-deoxyadenosine + L-methionine + 2 oxidized [2Fe-2S]-[ferredoxin] + S-adenosyl-L-homocysteine. Functionally, specifically methylates position 2 of adenine 2503 in 23S rRNA and position 2 of adenine 37 in tRNAs. This Bacillus licheniformis (strain ATCC 14580 / DSM 13 / JCM 2505 / CCUG 7422 / NBRC 12200 / NCIMB 9375 / NCTC 10341 / NRRL NRS-1264 / Gibson 46) protein is Probable dual-specificity RNA methyltransferase RlmN.